A 227-amino-acid polypeptide reads, in one-letter code: Atypical response regulator protein ChxR (227 aa).

The Response regulatory domain maps to 6-108; sequence HVLLVSEHWD…ILKSAISLFL (103 aa). A DNA-binding region (ompR/PhoB-type) is located at residues 117 to 213; the sequence is PESIRFGPNV…LRGVGYLFSD (97 aa).

As to quaternary structure, homodimer.

In terms of biological role, may be a global positive regulator of transcription. Binds a cis-acting element of its own promoter DNA sequence and is hence probably also involved in its own transcription activation. The recognition sequence is 5'-WHGAWNH-N(3-5)-WHGAWNH-3', where W is A/T, H is C/A/T, N is G/C/A/T and the linker length in the middle is 3 to 5 nucleotides. This chain is Atypical response regulator protein ChxR, found in Chlamydia trachomatis serovar L2 (strain ATCC VR-902B / DSM 19102 / 434/Bu).